A 354-amino-acid chain; its full sequence is MTGDNLVSAYVSDAERDVEASVRPRRLAEFIAQERVRDQLDLLLQGALRRGSPPDHILLSGPPGLGKTSLANIVAAELGTSIRVTSGPAIERSGDLAAILTSLGEGDVLFIDEVHRIARPAEELLYSAMEDFRVDVVVGKGPGATAIPLDVEPFTLVGATTRAGLLTGPMRDRFGFVAHLDFYSPADLETLLNRSARILGVPITADGAAEISGRARGTPRIANRLLRRVRDFAEVRADGVVTRETAQAALTVYDVDALGLDRLDRAVLTALVDLFRGGPVGLSTLAVAVGEQPDTVEEVCEPFLVRAGLLARTPRGRVATEAAWHHLGRTPANGTFGPDVPPARDLFSVEPDQP.

Residues 1 to 183 (MTGDNLVSAY…FGFVAHLDFY (183 aa)) are large ATPase domain (RuvB-L). Residues Arg23, Gly64, Lys67, Thr68, Ser69, 130 to 132 (EDF), Arg173, Tyr183, and Arg220 each bind ATP. Residue Thr68 coordinates Mg(2+). The segment at 184-254 (SPADLETLLN…TAQAALTVYD (71 aa)) is small ATPAse domain (RuvB-S). The tract at residues 257-354 (ALGLDRLDRA…DLFSVEPDQP (98 aa)) is head domain (RuvB-H). DNA is bound by residues Arg312 and Arg317.

This sequence belongs to the RuvB family. In terms of assembly, homohexamer. Forms an RuvA(8)-RuvB(12)-Holliday junction (HJ) complex. HJ DNA is sandwiched between 2 RuvA tetramers; dsDNA enters through RuvA and exits via RuvB. An RuvB hexamer assembles on each DNA strand where it exits the tetramer. Each RuvB hexamer is contacted by two RuvA subunits (via domain III) on 2 adjacent RuvB subunits; this complex drives branch migration. In the full resolvosome a probable DNA-RuvA(4)-RuvB(12)-RuvC(2) complex forms which resolves the HJ.

The protein localises to the cytoplasm. It carries out the reaction ATP + H2O = ADP + phosphate + H(+). In terms of biological role, the RuvA-RuvB-RuvC complex processes Holliday junction (HJ) DNA during genetic recombination and DNA repair, while the RuvA-RuvB complex plays an important role in the rescue of blocked DNA replication forks via replication fork reversal (RFR). RuvA specifically binds to HJ cruciform DNA, conferring on it an open structure. The RuvB hexamer acts as an ATP-dependent pump, pulling dsDNA into and through the RuvAB complex. RuvB forms 2 homohexamers on either side of HJ DNA bound by 1 or 2 RuvA tetramers; 4 subunits per hexamer contact DNA at a time. Coordinated motions by a converter formed by DNA-disengaged RuvB subunits stimulates ATP hydrolysis and nucleotide exchange. Immobilization of the converter enables RuvB to convert the ATP-contained energy into a lever motion, pulling 2 nucleotides of DNA out of the RuvA tetramer per ATP hydrolyzed, thus driving DNA branch migration. The RuvB motors rotate together with the DNA substrate, which together with the progressing nucleotide cycle form the mechanistic basis for DNA recombination by continuous HJ branch migration. Branch migration allows RuvC to scan DNA until it finds its consensus sequence, where it cleaves and resolves cruciform DNA. The protein is Holliday junction branch migration complex subunit RuvB of Salinispora tropica (strain ATCC BAA-916 / DSM 44818 / JCM 13857 / NBRC 105044 / CNB-440).